Consider the following 797-residue polypeptide: Probable exo-1,4-beta-xylosidase bxlB (797 aa).

An N-terminal signal peptide occupies residues 1 to 21 (MPLICIVYFLQYLDKIAISYA). Residues Asn86 and Asn126 are each glycosylated (N-linked (GlcNAc...) asparagine). Residue Asp312 is part of the active site. 6 N-linked (GlcNAc...) asparagine glycosylation sites follow: Asn364, Asn431, Asn442, Asn483, Asn644, and Asn787.

It belongs to the glycosyl hydrolase 3 family.

The protein resides in the secreted. It carries out the reaction Hydrolysis of (1-&gt;4)-beta-D-xylans, to remove successive D-xylose residues from the non-reducing termini.. It functions in the pathway glycan degradation; xylan degradation. Its function is as follows. Xylan 1,4-beta-xylosidase involved in the hydrolysis of xylan, a major structural heterogeneous polysaccharide found in plant biomass representing the second most abundant polysaccharide in the biosphere, after cellulose. This Aspergillus oryzae (strain ATCC 42149 / RIB 40) (Yellow koji mold) protein is Probable exo-1,4-beta-xylosidase bxlB (bxlB).